We begin with the raw amino-acid sequence, 180 residues long: 4-hydroxy-3-methylbut-2-enyl diphosphate reductase (180 aa).

C12 is a binding site for [4Fe-4S] cluster. (2E)-4-hydroxy-3-methylbut-2-enyl diphosphate contacts are provided by H41 and H74. Dimethylallyl diphosphate-binding residues include H41 and H74. 2 residues coordinate isopentenyl diphosphate: H41 and H74. Position 96 (C96) interacts with [4Fe-4S] cluster. Residue H124 participates in (2E)-4-hydroxy-3-methylbut-2-enyl diphosphate binding. H124 is a binding site for dimethylallyl diphosphate. Residue H124 participates in isopentenyl diphosphate binding. E126 functions as the Proton donor in the catalytic mechanism. T168 is a (2E)-4-hydroxy-3-methylbut-2-enyl diphosphate binding site.

This sequence belongs to the IspH family. It depends on [4Fe-4S] cluster as a cofactor.

The enzyme catalyses isopentenyl diphosphate + 2 oxidized [2Fe-2S]-[ferredoxin] + H2O = (2E)-4-hydroxy-3-methylbut-2-enyl diphosphate + 2 reduced [2Fe-2S]-[ferredoxin] + 2 H(+). The catalysed reaction is dimethylallyl diphosphate + 2 oxidized [2Fe-2S]-[ferredoxin] + H2O = (2E)-4-hydroxy-3-methylbut-2-enyl diphosphate + 2 reduced [2Fe-2S]-[ferredoxin] + 2 H(+). It functions in the pathway isoprenoid biosynthesis; dimethylallyl diphosphate biosynthesis; dimethylallyl diphosphate from (2E)-4-hydroxy-3-methylbutenyl diphosphate: step 1/1. The protein operates within isoprenoid biosynthesis; isopentenyl diphosphate biosynthesis via DXP pathway; isopentenyl diphosphate from 1-deoxy-D-xylulose 5-phosphate: step 6/6. Its function is as follows. Catalyzes the conversion of 1-hydroxy-2-methyl-2-(E)-butenyl 4-diphosphate (HMBPP) into a mixture of isopentenyl diphosphate (IPP) and dimethylallyl diphosphate (DMAPP). Acts in the terminal step of the DOXP/MEP pathway for isoprenoid precursor biosynthesis. The protein is 4-hydroxy-3-methylbut-2-enyl diphosphate reductase of Pseudomonas fluorescens.